A 67-amino-acid chain; its full sequence is MHPIIWELSHMVDLQAAAQKLKRCYQRRVAITAGGLKHRLMSSLIIIIIIRINYLRDNSVIILESSY.

The N-terminal stretch at 1-21 (MHPIIWELSHMVDLQAAAQKL) is a signal peptide.

In terms of tissue distribution, expressed by the venom gland.

The protein resides in the secreted. Shows contractile activity on isolated ileum smooth muscle. This is Vespin from Vespa magnifica (Hornet).